A 430-amino-acid chain; its full sequence is Enolase (430 aa).

Glutamine 164 provides a ligand contact to (2R)-2-phosphoglycerate. The Proton donor role is filled by glutamate 208. Residues aspartate 245, glutamate 288, and aspartate 315 each coordinate Mg(2+). (2R)-2-phosphoglycerate-binding residues include lysine 340, arginine 369, serine 370, and lysine 391. Lysine 340 serves as the catalytic Proton acceptor.

It belongs to the enolase family. It depends on Mg(2+) as a cofactor.

It is found in the cytoplasm. It localises to the secreted. The protein localises to the cell surface. It carries out the reaction (2R)-2-phosphoglycerate = phosphoenolpyruvate + H2O. It participates in carbohydrate degradation; glycolysis; pyruvate from D-glyceraldehyde 3-phosphate: step 4/5. Catalyzes the reversible conversion of 2-phosphoglycerate (2-PG) into phosphoenolpyruvate (PEP). It is essential for the degradation of carbohydrates via glycolysis. This is Enolase from Thermococcus kodakarensis (strain ATCC BAA-918 / JCM 12380 / KOD1) (Pyrococcus kodakaraensis (strain KOD1)).